A 370-amino-acid polypeptide reads, in one-letter code: 2-aminoethylphosphonate--pyruvate transaminase 2 (370 aa).

Lysine 194 is modified (N6-(pyridoxal phosphate)lysine).

Belongs to the class-V pyridoxal-phosphate-dependent aminotransferase family. PhnW subfamily. As to quaternary structure, homodimer. Pyridoxal 5'-phosphate serves as cofactor.

The catalysed reaction is (2-aminoethyl)phosphonate + pyruvate = phosphonoacetaldehyde + L-alanine. Involved in phosphonate degradation. The protein is 2-aminoethylphosphonate--pyruvate transaminase 2 of Paraburkholderia xenovorans (strain LB400).